Here is an 806-residue protein sequence, read N- to C-terminus: Mitogen-activated protein kinase 7 (806 aa).

The segment at Met-1 to Ala-23 is disordered. The residue at position 2 (Ala-2) is an N-acetylalanine. Positions Ala-2–Thr-77 are required for cytoplasmic targeting. In terms of domain architecture, Protein kinase spans Tyr-55–Leu-347. Residues Ile-61–Val-69 and Lys-84 contribute to the ATP site. A required for binding to MAP2K5 region spans residues Gly-78–Leu-139. The tract at residues Met-140–Gln-406 is necessary for oligomerization. The Proton acceptor role is filled by Asp-182. A TXY motif is present at residues Thr-219–Tyr-221. The interval Pro-407–Pro-806 is may not be required for kinase activity; required to stimulate MEF2C activity. 2 disordered regions span residues Ala-424–Asp-473 and Arg-488–Ser-727. Over residues Ser-433–Asp-443 the composition is skewed to pro residues. Composition is skewed to basic and acidic residues over residues Pro-502 to Glu-519, Arg-527 to Gly-544, and Asp-563 to Thr-573. The short motif at Arg-505 to Glu-539 is the Nuclear localization signal element. Residues Pro-578–Ala-592 show a composition bias toward pro residues. Residues Pro-593–Thr-603 are compositionally biased toward low complexity. Residues Val-627–Ala-643 are compositionally biased toward pro residues. Residues Thr-647 to Val-660 show a composition bias toward polar residues. Pro residues predominate over residues Pro-678–Thr-689. Residues Ser-693–Ser-710 show a composition bias toward polar residues. Position 710 is a phosphoserine (Ser-710). Phosphothreonine is present on Thr-723.

This sequence belongs to the protein kinase superfamily. CMGC Ser/Thr protein kinase family. MAP kinase subfamily. As to quaternary structure, interacts with MAP2K5. Forms oligomers. Interacts with MEF2A, MEF2C and MEF2D; the interaction phosphorylates the MEF2s and enhances transcriptional activity of MEF2A, MEF2C but not MEF2D. Interacts with SGK1. Interacts with PML. Interacts (via N-terminal half) with HSP90AB1-CDC37 chaperone complex in resting cells; the interaction is MAP2K5-independent and prevents MAPK7 from ubiquitination and proteasomal degradation. Interacts with STUB1/CHIP; the interaction is enhanced in the presence of IGF1 or MAP2K5 and promotes STUB1/CHIP E3 ligase activity. Mg(2+) is required as a cofactor. In terms of processing, dually phosphorylated on Thr-219 and Tyr-221, which activates the enzyme. In terms of tissue distribution, detected in testis, brain, kidney, lung and heart. Detected in total embryo (at protein level).

The protein localises to the cytoplasm. Its subcellular location is the nucleus. It is found in the PML body. The catalysed reaction is L-seryl-[protein] + ATP = O-phospho-L-seryl-[protein] + ADP + H(+). It catalyses the reaction L-threonyl-[protein] + ATP = O-phospho-L-threonyl-[protein] + ADP + H(+). With respect to regulation, activated by tyrosine and threonine phosphorylation. Activated in response to hyperosmolarity, hydrogen peroxide, and epidermal growth factor (EGF). Its function is as follows. Plays a role in various cellular processes such as proliferation, differentiation and cell survival. The upstream activator of MAPK7 is the MAPK kinase MAP2K5. Upon activation, it translocates to the nucleus and phosphorylates various downstream targets including MEF2C. EGF activates MAPK7 through a Ras-independent and MAP2K5-dependent pathway. As part of the MAPK/ERK signaling pathway, acts as a negative regulator of apoptosis in cardiomyocytes via interaction with STUB1/CHIP and promotion of STUB1-mediated ubiquitination and degradation of ICER-type isoforms of CREM. May have a role in muscle cell differentiation. May be important for endothelial function and maintenance of blood vessel integrity. MAP2K5 and MAPK7 interact specifically with one another and not with MEK1/ERK1 or MEK2/ERK2 pathways. Phosphorylates SGK1 at Ser-78 and this is required for growth factor-induced cell cycle progression. Involved in the regulation of p53/TP53 by disrupting the PML-MDM2 interaction. This is Mitogen-activated protein kinase 7 (Mapk7) from Mus musculus (Mouse).